Reading from the N-terminus, the 725-residue chain is MGRKVTVATCALNQWALDFEGNFQRILKSIQIAKGKGARYRLGPELEICGYGCWDHYHESDTLLHSLQVLAALLDSPVTQDIICDVGMPIMHRNVRYNCRVIFLNRKILLIRPKMALANEGNYRELRWFTPWTRSRQTEEYVLPRMLQDLTKQKTVPFGDVVLATQDTCVGSEICEELWTPRSPHIDMGLDGVEIITNASGSHHVLRKAHTRVDLVTMATSKNGGIYLLANQKGCDGDRLYYDGCAMIAMNGSIFAQGTQFSLDDVEVLTATLDLEDVRSYKAEISSRNLEATRVSPYPRVTVDFALSVSEDLLEPVSEPMEWTYHRPEEEISLGPACWLWDFLRRSKQAGFFLPLSGGVDSAASACIVYSMCCLVCDAVKSGNQQVLTDVQNLVDESSYTPQDPRELCGRLLTTCYMASENSSQETHSRATKLAQLIGSYHINLSIDTAVKAVLGIFSLMTGKLPRFSAHGGSSRENLALQNVQARIRMVLAYLFAQLSLWSRGARGSLLVLGSANVDESLLGYLTKYDCSSADINPIGGISKTDLRAFVQFCAERFQLPVLQTILSAPATAELEPLADGQVSQMDEEDMGMTYAELSIFGRLRKVAKAGPYSMFCKLLNMWRDSYTPTQVAEKVKLFFSKYSMNRHKMTTLTPAYHAENYSPDDNRFDLRPFLYNTRWPWQFLCIDNQVLQLERKASQTREEQVLEHFKEPSPIWKQLLPKDP.

The CN hydrolase domain maps to 5–275 (VTVATCALNQ…VEVLTATLDL (271 aa)). E45 acts as the Proton acceptor; for glutaminase activity in catalysis. The active-site For glutaminase activity is K114. The Nucleophile; for glutaminase activity role is filled by C175. Residues 325–706 (YHRPEEEISL…KASQTREEQV (382 aa)) are ligase. 355-362 (PLSGGVDS) is an ATP binding site. Residue S357 is part of the active site.

In the C-terminal section; belongs to the NAD synthetase family. In terms of assembly, homohexamer. In terms of tissue distribution, highly expressed in small intestine, kidney, liver and testis. Weakly expressed in skeletal muscle, spleen, lung, heart and brain.

It catalyses the reaction deamido-NAD(+) + L-glutamine + ATP + H2O = L-glutamate + AMP + diphosphate + NAD(+) + H(+). It functions in the pathway cofactor biosynthesis; NAD(+) biosynthesis; NAD(+) from deamido-NAD(+) (L-Gln route): step 1/1. In terms of biological role, catalyzes the final step of the nicotinamide adenine dinucleotide (NAD) de novo synthesis pathway, the ATP-dependent amidation of deamido-NAD using L-glutamine as a nitrogen source. The protein is Glutamine-dependent NAD(+) synthetase (Nadsyn1) of Mus musculus (Mouse).